An 80-amino-acid polypeptide reads, in one-letter code: CLAVATA3/ESR (CLE)-related protein 40 (80 aa).

Residues 1-25 form the signal peptide; sequence MAAMKYKGSVFIILVILLLSSSLLA. The disordered stretch occupies residues 45–80; that stretch reads MKKEKKIDGGTANEVEERQVPTGSDPLHHKHIPFTP. Pro65 carries the hydroxyproline modification.

Belongs to the CLV3/ESR signal peptide family. As to expression, mostly expressed at low levels in stems and apex, and, to a lower extent, in roots, seedlings, leaves, flowers, siliques and pollen.

The protein localises to the secreted. The protein resides in the extracellular space. In terms of biological role, extracellular signal peptide secreted by differentiated root cells that regulates root cell fate. Acts with ACR4 as a ligand-receptor pair in a signal transduction pathway, coordinating movement of the root tip and organization of cell divisions in the root meristem. Promotes cell differentiation in the distal root meristem in a dose-dependent manner, especially the transition from columella stem cells (CSC) daughters into columella cells (CCs). Induces ACR4 expression in root quiescent center (QC). Involved in WUX5 QC-specific expression pattern regulation. Regulates the transition of protophloem cells from proliferation to differentiation, thus impinging on postembryonic growth capacity of the root meristem; this signaling pathway requires CRN and CLV2. The polypeptide is CLAVATA3/ESR (CLE)-related protein 40 (Arabidopsis thaliana (Mouse-ear cress)).